Here is a 172-residue protein sequence, read N- to C-terminus: Large ribosomal subunit protein uL10 (172 aa).

Belongs to the universal ribosomal protein uL10 family. Part of the ribosomal stalk of the 50S ribosomal subunit. The N-terminus interacts with L11 and the large rRNA to form the base of the stalk. The C-terminus forms an elongated spine to which L12 dimers bind in a sequential fashion forming a multimeric L10(L12)X complex.

In terms of biological role, forms part of the ribosomal stalk, playing a central role in the interaction of the ribosome with GTP-bound translation factors. The sequence is that of Large ribosomal subunit protein uL10 from Bartonella tribocorum (strain CIP 105476 / IBS 506).